The chain runs to 408 residues: DNA primase DnaG (408 aa).

Residues 166-241 (EEIIIVEGRA…KIDYIARAPP (76 aa)) form the Toprim domain. Glu172, Asp215, and Asp217 together coordinate Mg(2+).

This sequence belongs to the archaeal DnaG primase family. As to quaternary structure, forms a ternary complex with MCM helicase and DNA. Component of the archaeal exosome complex. Mg(2+) serves as cofactor.

It catalyses the reaction ssDNA + n NTP = ssDNA/pppN(pN)n-1 hybrid + (n-1) diphosphate.. Functionally, RNA polymerase that catalyzes the synthesis of short RNA molecules used as primers for DNA polymerase during DNA replication. Also part of the exosome, which is a complex involved in RNA degradation. Acts as a poly(A)-binding protein that enhances the interaction between heteromeric, adenine-rich transcripts and the exosome. This chain is DNA primase DnaG, found in Desulfurococcus amylolyticus (strain DSM 18924 / JCM 16383 / VKM B-2413 / 1221n) (Desulfurococcus kamchatkensis).